Consider the following 389-residue polypeptide: Methylthioribose kinase (389 aa).

Residues asparagine 37, lysine 52, and 106–108 (EDL) contribute to the ATP site. A substrate-binding site is contributed by aspartate 224. An ATP-binding site is contributed by 241–243 (DPE). Residue arginine 331 coordinates substrate.

The protein belongs to the methylthioribose kinase family. As to quaternary structure, homodimer.

It carries out the reaction 5-(methylsulfanyl)-D-ribose + ATP = 5-(methylsulfanyl)-alpha-D-ribose 1-phosphate + ADP + H(+). It functions in the pathway amino-acid biosynthesis; L-methionine biosynthesis via salvage pathway; S-methyl-5-thio-alpha-D-ribose 1-phosphate from S-methyl-5'-thioadenosine (hydrolase route): step 2/2. In terms of biological role, catalyzes the phosphorylation of methylthioribose into methylthioribose-1-phosphate. This chain is Methylthioribose kinase, found in Exiguobacterium sibiricum (strain DSM 17290 / CCUG 55495 / CIP 109462 / JCM 13490 / 255-15).